Consider the following 303-residue polypeptide: 1-phosphofructokinase (303 aa).

248 to 249 (GD) contacts ATP. D249 acts as the Proton acceptor in catalysis.

This sequence belongs to the carbohydrate kinase PfkB family.

The catalysed reaction is beta-D-fructose 1-phosphate + ATP = beta-D-fructose 1,6-bisphosphate + ADP + H(+). Catalyzes the ATP-dependent phosphorylation of fructose-l-phosphate to fructose-l,6-bisphosphate. The protein is 1-phosphofructokinase (fruK) of Bacillus subtilis (strain 168).